A 573-amino-acid chain; its full sequence is MRTENTATLNLIWGALILEELARIGVQHVCMAPGSRSTPLTLAAAQQTKLKRHLHFDERGLGFMALGLAKASRAPVAIITTSGTAVANLYPAIVEAWLTHVPLIVLSGDRPPELLDCGANQAIVQPGIFAHYAKQINLPTPDAHIAPQALLTTIDEAVANQTRPVHINCMYREPLYPSELGVPILDTESPYLKPLQTWLQLSRPYTQYGKYKQVSNPSDDAIMRFVHGKGVIVAGTLTPEQDPQQLIALSQKIGWPLLTDAQSQLRQHPAAIGNIDQLLQHPKARNLLQEADRVLVFGGRLLSKRLISYLAEQHWHSYWQVLPEQNRLDPSHNAKHVWHANAAQFAALNWYRSSSANWANTLITYNDELHNLFVRNIDHGEFGEAQVVRAIANTRPLEQQLFIGNSLPVRLYDMYAPVSCCTATTYTNRGASGIDGLLATACGLAAHEGKPTSLIIGDLSQLHDLNSLAIAKSLASPLVIVILNNDGGNIFNLLPVPNEQVRNDYYRLSHGLEFGYAAAMFNLPYNQVDNLADFQDSYNEALDFQGASIIEVNVSQTQASDQIAELNLWVKQS.

It belongs to the TPP enzyme family. MenD subfamily. As to quaternary structure, homodimer. Requires Mg(2+) as cofactor. Mn(2+) is required as a cofactor. It depends on thiamine diphosphate as a cofactor.

It carries out the reaction isochorismate + 2-oxoglutarate + H(+) = 5-enolpyruvoyl-6-hydroxy-2-succinyl-cyclohex-3-ene-1-carboxylate + CO2. It functions in the pathway quinol/quinone metabolism; 1,4-dihydroxy-2-naphthoate biosynthesis; 1,4-dihydroxy-2-naphthoate from chorismate: step 2/7. The protein operates within quinol/quinone metabolism; menaquinone biosynthesis. In terms of biological role, catalyzes the thiamine diphosphate-dependent decarboxylation of 2-oxoglutarate and the subsequent addition of the resulting succinic semialdehyde-thiamine pyrophosphate anion to isochorismate to yield 2-succinyl-5-enolpyruvyl-6-hydroxy-3-cyclohexene-1-carboxylate (SEPHCHC). This Shewanella putrefaciens (strain CN-32 / ATCC BAA-453) protein is 2-succinyl-5-enolpyruvyl-6-hydroxy-3-cyclohexene-1-carboxylate synthase.